The sequence spans 517 residues: 2,3-bisphosphoglycerate-independent phosphoglycerate mutase (517 aa).

Residues D12 and S62 each coordinate Mn(2+). The Phosphoserine intermediate role is filled by S62. Substrate-binding positions include H123, 153 to 154 (RD), R185, R191, 261 to 264 (RSDR), and K336. Residues D403, H407, D444, H445, and H463 each coordinate Mn(2+).

This sequence belongs to the BPG-independent phosphoglycerate mutase family. As to quaternary structure, monomer. The cofactor is Mn(2+).

It carries out the reaction (2R)-2-phosphoglycerate = (2R)-3-phosphoglycerate. Its pathway is carbohydrate degradation; glycolysis; pyruvate from D-glyceraldehyde 3-phosphate: step 3/5. Its function is as follows. Catalyzes the interconversion of 2-phosphoglycerate and 3-phosphoglycerate. The polypeptide is 2,3-bisphosphoglycerate-independent phosphoglycerate mutase (Methylobacillus flagellatus (strain ATCC 51484 / DSM 6875 / VKM B-1610 / KT)).